A 556-amino-acid chain; its full sequence is Urocanate hydratase (556 aa).

NAD(+)-binding positions include 53-54 (GG), Q131, 177-179 (GMG), E197, 243-244 (NA), 264-268 (QTSAH), 274-275 (YL), and Y323. The active site involves C411. G493 is a binding site for NAD(+).

Belongs to the urocanase family. The cofactor is NAD(+).

Its subcellular location is the cytoplasm. It carries out the reaction 4-imidazolone-5-propanoate = trans-urocanate + H2O. It participates in amino-acid degradation; L-histidine degradation into L-glutamate; N-formimidoyl-L-glutamate from L-histidine: step 2/3. Catalyzes the conversion of urocanate to 4-imidazolone-5-propionate. The sequence is that of Urocanate hydratase from Pseudomonas fluorescens (strain SBW25).